A 99-amino-acid polypeptide reads, in one-letter code: Large ribosomal subunit protein uL23 (99 aa).

This sequence belongs to the universal ribosomal protein uL23 family. As to quaternary structure, part of the 50S ribosomal subunit. Contacts protein L29, and trigger factor when it is bound to the ribosome.

Its function is as follows. One of the early assembly proteins it binds 23S rRNA. One of the proteins that surrounds the polypeptide exit tunnel on the outside of the ribosome. Forms the main docking site for trigger factor binding to the ribosome. This chain is Large ribosomal subunit protein uL23, found in Alkalilimnicola ehrlichii (strain ATCC BAA-1101 / DSM 17681 / MLHE-1).